A 157-amino-acid chain; its full sequence is 6,7-dimethyl-8-ribityllumazine synthase (157 aa).

5-amino-6-(D-ribitylamino)uracil contacts are provided by residues phenylalanine 24, 56–58 (SFE), and 79–81 (VLI). A (2S)-2-hydroxy-3-oxobutyl phosphate-binding site is contributed by 84 to 85 (ET). Residue histidine 87 is the Proton donor of the active site. Phenylalanine 112 lines the 5-amino-6-(D-ribitylamino)uracil pocket. Arginine 126 provides a ligand contact to (2S)-2-hydroxy-3-oxobutyl phosphate.

The protein belongs to the DMRL synthase family.

The enzyme catalyses (2S)-2-hydroxy-3-oxobutyl phosphate + 5-amino-6-(D-ribitylamino)uracil = 6,7-dimethyl-8-(1-D-ribityl)lumazine + phosphate + 2 H2O + H(+). It functions in the pathway cofactor biosynthesis; riboflavin biosynthesis; riboflavin from 2-hydroxy-3-oxobutyl phosphate and 5-amino-6-(D-ribitylamino)uracil: step 1/2. Catalyzes the formation of 6,7-dimethyl-8-ribityllumazine by condensation of 5-amino-6-(D-ribitylamino)uracil with 3,4-dihydroxy-2-butanone 4-phosphate. This is the penultimate step in the biosynthesis of riboflavin. This is 6,7-dimethyl-8-ribityllumazine synthase from Pyrococcus furiosus (strain ATCC 43587 / DSM 3638 / JCM 8422 / Vc1).